The following is a 286-amino-acid chain: Simplagrin (286 aa).

The first 20 residues, 1–20 (MKKFCLIFLLLALTALHVKG), serve as a signal peptide directing secretion. A disordered region spans residues 17–179 (HVKGSPIPDE…GSSSGGEESA (163 aa)). Composition is skewed to acidic residues over residues 24 to 69 (PDEE…DGQE) and 103 to 129 (VESG…TGGE). The N-linked (GlcNAc...) asparagine glycan is linked to asparagine 116. Residues 166–177 (SNRAGSSSGGEE) show a composition bias toward low complexity.

The protein belongs to the aegyptin family. As to quaternary structure, monomeric in solution; likely has an elongated non-globular form. Interacts with human and rat collagens (via a RGQOGVMGF peptide, where O is hydroxyproline). In terms of processing, not glycosylated. In terms of tissue distribution, salivary gland.

Its subcellular location is the secreted. Inhibits host platelet aggregation induced by low concentrations of collagen via blocking the von Willebrand Factor (VWF) interaction with collagen. The chain is Simplagrin from Simulium nigrimanum (Black fly).